The chain runs to 143 residues: Large ribosomal subunit protein uL11 (143 aa).

Belongs to the universal ribosomal protein uL11 family. In terms of assembly, part of the ribosomal stalk of the 50S ribosomal subunit. Interacts with L10 and the large rRNA to form the base of the stalk. L10 forms an elongated spine to which L12 dimers bind in a sequential fashion forming a multimeric L10(L12)X complex. Post-translationally, one or more lysine residues are methylated.

Functionally, forms part of the ribosomal stalk which helps the ribosome interact with GTP-bound translation factors. In Burkholderia mallei (strain NCTC 10247), this protein is Large ribosomal subunit protein uL11.